The sequence spans 100 residues: Small ribosomal subunit protein uS14c (100 aa).

Belongs to the universal ribosomal protein uS14 family. In terms of assembly, part of the 30S ribosomal subunit.

It is found in the plastid. The protein resides in the chloroplast. Its function is as follows. Binds 16S rRNA, required for the assembly of 30S particles. This Gracilaria tenuistipitata var. liui (Red alga) protein is Small ribosomal subunit protein uS14c.